The following is a 315-amino-acid chain: Ribonuclease HII (315 aa).

The 190-residue stretch at 78-267 (TLVAGVDEAG…VREALGLAPL (190 aa)) folds into the RNase H type-2 domain. Positions 84, 85, and 176 each coordinate a divalent metal cation. Residues 273–292 (APPPESAAEPGGEGAIAGIA) form a disordered region. Over residues 278–292 (SAAEPGGEGAIAGIA) the composition is skewed to low complexity.

This sequence belongs to the RNase HII family. Mn(2+) serves as cofactor. Mg(2+) is required as a cofactor.

Its subcellular location is the cytoplasm. The enzyme catalyses Endonucleolytic cleavage to 5'-phosphomonoester.. Functionally, endonuclease that specifically degrades the RNA of RNA-DNA hybrids. The polypeptide is Ribonuclease HII (Anaeromyxobacter sp. (strain Fw109-5)).